Reading from the N-terminus, the 56-residue chain is Ferredoxin (56 aa).

2 4Fe-4S ferredoxin-type domains span residues 2 to 28 and 29 to 56; these read AYKI…SQGD and SIFV…PVQE. Positions 9, 12, 15, 19, 38, 41, 44, and 48 each coordinate [4Fe-4S] cluster.

It depends on [4Fe-4S] cluster as a cofactor.

In terms of biological role, ferredoxins are iron-sulfur proteins that transfer electrons in a wide variety of metabolic reactions. The sequence is that of Ferredoxin from Clostridium pasteurianum.